The sequence spans 169 residues: Myelin basic protein (169 aa).

Alanine 1 carries the N-acetylalanine modification. The disordered stretch occupies residues 1 to 114 (AAQKRPSQRS…GRGLSLSRFS (114 aa)). At serine 7 the chain carries Phosphoserine; in C5 and C6. Position 10 is a phosphoserine (serine 10). Tyrosine 12 carries the phosphotyrosine modification. Serine 17 carries the phosphoserine modification. Phosphothreonine is present on threonine 18. Arginine 23 carries the post-translational modification Citrulline; in form C8b. Arginine 29 is subject to Citrulline. Threonine 33 is subject to Phosphothreonine. Residue serine 38 is modified to Phosphoserine. Position 41 is a citrulline; alternate (arginine 41). At arginine 41 the chain carries Omega-N-methylarginine; alternate. The tract at residues 43–87 (FGSDRGAPKRGSGKDGHHAARTTHYGSLPQKAQGHRPQDENPVVH) is induces experimental autoimmune encephalomyelitis (EAE) 1. Citrulline; in form C8b is present on arginine 47. Arginine 47 carries the omega-N-methylarginine modification. Residue serine 54 is modified to Phosphoserine; in C4, C5 and C6. Arginine 63 carries the citrulline modification. Threonine 65 is modified (phosphothreonine). Residue tyrosine 67 is modified to Phosphotyrosine. At threonine 94 the chain carries Phosphothreonine. A Citrulline; in form C2, C3, C8a and C8b modification is found at arginine 96. Threonine 97 is subject to Phosphothreonine; by MAPK; in C3, C4, C5 and C6. Glutamine 102 carries the deamidated glutamine; in form C5 modification. Arginine 106 is subject to Citrulline; alternate. Position 106 is an omega-N-methylarginine; alternate (arginine 106). Arginine 106 carries the symmetric dimethylarginine; alternate modification. Position 112 is a citrulline (arginine 112). At serine 114 the chain carries Phosphoserine. The interval 114-122 (SWGAEGQKP) is induces experimental autoimmune encephalomyelitis (EAE) 2. The residue at position 120 (glutamine 120) is a Deamidated glutamine; in form C3. Lysine 121 bears the N6-acetyllysine mark. Residue arginine 129 is modified to Citrulline. The segment at 133–169 (YKSAHKGLKGHDAQGTLSKIFKLGGRDSRSGSPMARR) is disordered. At glutamine 146 the chain carries Deamidated glutamine; in form C2. Residue arginine 158 is modified to Citrulline. Serine 160 is subject to Phosphoserine; in C4 and C6. At arginine 161 the chain carries Citrulline; in form C3. Serine 164 is modified (phosphoserine; in form C3, C5 and C6). Residues arginine 168 and arginine 169 each carry the citrulline modification.

Belongs to the myelin basic protein family. As to quaternary structure, homodimer; self-associates in the presence of lysolipid. In terms of processing, at least 6 charge isomers; C1 (the most cationic and least modified form), C2, C3, C4, C5 and C6 (the least cationic form); are produced as a result of optional post-translational modifications, such as phosphorylation of serine or threonine residues, deamidation of glutamine or asparagine residues, citrullination and methylation of arginine residues. Post-translationally, phosphorylated by TAOK2, VRK2, MAPK11, MAPK12, MAPK14 and MINK1. Proteolytically cleaved in B cell lysosomes by cathepsin CTSG which degrades the major immunogenic MBP epitope and prevents the activation of MBP-specific autoreactive T cells. As to expression, found in both the central and the peripheral nervous system.

The protein localises to the myelin membrane. Functionally, is, with PLP, the most abundant protein component of the myelin membrane in the CNS. Has a role in both the formation and stabilization of this compact multilayer arrangement of bilayers. Each splice variant and charge isomer may have a specialized function in the assembly of an optimized, biochemically functional myelin membrane. The protein is Myelin basic protein (MBP) of Bos taurus (Bovine).